The chain runs to 199 residues: Superoxide dismutase [Mn/Fe] 2 (199 aa).

4 residues coordinate Fe(3+): histidine 27, histidine 81, aspartate 161, and histidine 165. Mn(2+) is bound by residues histidine 27, histidine 81, aspartate 161, and histidine 165.

It belongs to the iron/manganese superoxide dismutase family. In terms of assembly, homodimer. Can also form a heterodimer with SodA. Mn(2+) is required as a cofactor. It depends on Fe(3+) as a cofactor.

The catalysed reaction is 2 superoxide + 2 H(+) = H2O2 + O2. In terms of biological role, destroys superoxide anion radicals which are normally produced within the cells and which are toxic to biological systems. Catalyzes the dismutation of superoxide anion radicals into O2 and H2O2 by successive reduction and oxidation of the transition metal ion at the active site. The polypeptide is Superoxide dismutase [Mn/Fe] 2 (sodM) (Staphylococcus aureus (strain bovine RF122 / ET3-1)).